Reading from the N-terminus, the 129-residue chain is Large ribosomal subunit protein uL14m (129 aa).

This sequence belongs to the universal ribosomal protein uL14 family. As to quaternary structure, component of the mitochondrial ribosome large subunit (39S) which comprises a 16S rRNA and about 50 distinct proteins.

The protein localises to the mitochondrion. The polypeptide is Large ribosomal subunit protein uL14m (mrpl14) (Dictyostelium discoideum (Social amoeba)).